The primary structure comprises 955 residues: UPF0182 protein syc2310_c (955 aa).

9 consecutive transmembrane segments (helical) span residues 12–32 (IAAI…TLWF), 45–65 (LAVQ…LIGG), 85–105 (LQLG…LALT), 141–161 (GSWP…LFLW), 163–183 (PWPL…LLTS), 224–244 (FDLW…YYLA), 263–283 (HLVR…WLAQ), 306–326 (LPLL…LFWQ), and 343–363 (AAIA…QLVV).

Belongs to the UPF0182 family.

It is found in the cell membrane. The protein is UPF0182 protein syc2310_c of Synechococcus sp. (strain ATCC 27144 / PCC 6301 / SAUG 1402/1) (Anacystis nidulans).